Reading from the N-terminus, the 124-residue chain is Seripauperin-3 (124 aa).

The chain crosses the membrane as a helical span at residues 7-24 (IAAGVAAIAAGIAAAPAT).

This sequence belongs to the SRP1/TIP1 family. Seripauperin subfamily.

The protein resides in the membrane. This is Seripauperin-3 (PAU3) from Saccharomyces cerevisiae (strain ATCC 204508 / S288c) (Baker's yeast).